The primary structure comprises 220 residues: Small ribosomal subunit protein uS3 (220 aa).

The 69-residue stretch at 38–106 (IREFVKKSLN…EVFLNIVEVR (69 aa)) folds into the KH type-2 domain.

Belongs to the universal ribosomal protein uS3 family. In terms of assembly, part of the 30S ribosomal subunit. Forms a tight complex with proteins S10 and S14.

Binds the lower part of the 30S subunit head. Binds mRNA in the 70S ribosome, positioning it for translation. The chain is Small ribosomal subunit protein uS3 from Myxococcus xanthus (strain DK1622).